We begin with the raw amino-acid sequence, 182 residues long: Transmembrane protein 11 homolog, mitochondrial (182 aa).

At Ser-25 the chain carries Phosphoserine. A run of 2 helical transmembrane segments spans residues 70–89 (TAVA…RDRP) and 91–108 (IAAP…LYTV).

It belongs to the TMEM11 family.

It localises to the mitochondrion inner membrane. In terms of biological role, plays a role in mitochondrial morphogenesis. The protein is Transmembrane protein 11 homolog, mitochondrial (Pmi) of Drosophila melanogaster (Fruit fly).